The chain runs to 234 residues: bZIP transcription factor 27 (234 aa).

Residues 152–159 (KKRGQDSD) carry the Nuclear localization signal motif. One can recognise a bZIP domain in the interval 163–213 (GDRRYKRMIKNRESAARSRARKQAYTNELELEIAHLQTENARLKIQQEQLK). The segment at 165–184 (RRYKRMIKNRESAARSRARK) is basic motif. Residues 191 to 212 (LELEIAHLQTENARLKIQQEQL) are leucine-zipper. Phosphothreonine is present on Thr231.

The protein belongs to the bZIP family. As to quaternary structure, self-interacts. Interacts with FT and FD/BZIP14. Interacts with CPK33. Phosphorylated. In terms of tissue distribution, expressed on the flanks of the shoot apex.

The protein localises to the nucleus. Its function is as follows. Transcription factor required for the transition to flowering promoted by FT. This is bZIP transcription factor 27 from Arabidopsis thaliana (Mouse-ear cress).